An 880-amino-acid chain; its full sequence is Calcium-transporting ATPase lmo0841 (880 aa).

4 consecutive transmembrane segments (helical) span residues 47 to 67, 68 to 88, 243 to 263, and 271 to 291; these read LWKL…VIAA, LVQL…VLIV, LGLG…GRVL, and MATA…AAIP. Ca(2+) contacts are provided by Val287, Ala288, Ile290, and Glu292. Asp334 acts as the 4-aspartylphosphate intermediate in catalysis. The next 5 helical transmembrane spans lie at 681–701, 707–727, 756–776, 819–839, and 854–874; these read IAYL…ALVL, FTAL…AIAL, AVIS…YIGM, YVIG…LPGA, and WSIA…IKVV. Residues Asn716 and Asp720 each coordinate Ca(2+).

This sequence belongs to the cation transport ATPase (P-type) (TC 3.A.3) family. Type IIA subfamily.

It localises to the cell membrane. It catalyses the reaction Ca(2+)(in) + ATP + H2O = Ca(2+)(out) + ADP + phosphate + H(+). With respect to regulation, phosphorylation is inhibited by EGTA and vanadate. ATPase activity is stimulated by Sr(2+). Inhibited by very high concentrations of cyclopiazonic acid (CPA). In terms of biological role, catalyzes the hydrolysis of ATP coupled with the transport of calcium. The transport is electrogenic with a probable ATP:Ca(2+):H(+) stoichiometry of 1:1:1. May have an important role in survival of the bacterium when stressed by a combination of a high calcium concentration and alkaline pH. The protein is Calcium-transporting ATPase lmo0841 of Listeria monocytogenes serovar 1/2a (strain ATCC BAA-679 / EGD-e).